Reading from the N-terminus, the 702-residue chain is Phosphoglycerol transferase I (702 aa).

3 helical membrane passes run 2–22 (HWML…SPRL), 71–91 (FSGY…PLLL), and 103–123 (GGAV…ASPL).

The protein belongs to the OpgB family.

It is found in the cell inner membrane. The enzyme catalyses a phosphatidylglycerol + a membrane-derived-oligosaccharide D-glucose = a 1,2-diacyl-sn-glycerol + a membrane-derived-oligosaccharide 6-(glycerophospho)-D-glucose.. It functions in the pathway glycan metabolism; osmoregulated periplasmic glucan (OPG) biosynthesis. Its function is as follows. Transfers a phosphoglycerol residue from phosphatidylglycerol to the membrane-bound nascent glucan backbones. The polypeptide is Phosphoglycerol transferase I (Xanthomonas euvesicatoria pv. vesicatoria (strain 85-10) (Xanthomonas campestris pv. vesicatoria)).